The following is a 286-amino-acid chain: Pyridoxal kinase PdxY (286 aa).

Substrate contacts are provided by residues Ser-9 and 44–45 (TQ). ATP-binding positions include Asp-111, Ala-143, Glu-148, Lys-181, and 208-211 (RPLV). Asp-223 contributes to the substrate binding site.

It belongs to the pyridoxine kinase family. PdxY subfamily. Homodimer. It depends on Mg(2+) as a cofactor.

The enzyme catalyses pyridoxal + ATP = pyridoxal 5'-phosphate + ADP + H(+). Its pathway is cofactor metabolism; pyridoxal 5'-phosphate salvage; pyridoxal 5'-phosphate from pyridoxal: step 1/1. Its function is as follows. Pyridoxal kinase involved in the salvage pathway of pyridoxal 5'-phosphate (PLP). Catalyzes the phosphorylation of pyridoxal to PLP. This Yersinia pestis bv. Antiqua (strain Antiqua) protein is Pyridoxal kinase PdxY.